The following is a 284-amino-acid chain: 2-dehydro-3-deoxyphosphooctonate aldolase (284 aa).

This sequence belongs to the KdsA family.

The protein resides in the cytoplasm. The enzyme catalyses D-arabinose 5-phosphate + phosphoenolpyruvate + H2O = 3-deoxy-alpha-D-manno-2-octulosonate-8-phosphate + phosphate. The protein operates within carbohydrate biosynthesis; 3-deoxy-D-manno-octulosonate biosynthesis; 3-deoxy-D-manno-octulosonate from D-ribulose 5-phosphate: step 2/3. It participates in bacterial outer membrane biogenesis; lipopolysaccharide biosynthesis. The polypeptide is 2-dehydro-3-deoxyphosphooctonate aldolase (Glaesserella parasuis serovar 5 (strain SH0165) (Haemophilus parasuis)).